Consider the following 335-residue polypeptide: 3-hydroxyisobutyrate dehydrogenase, mitochondrial (335 aa).

The N-terminal 35 residues, 1-35, are a transit peptide targeting the mitochondrion; the sequence is MAASLGFRGAASGLRYWSGRRRPVGSLAAVCSRSM. 39–68 lines the NAD(+) pocket; that stretch reads TPVGFIGLGNMGNPMAKNLIKHGYPLILYD. An N6-acetyllysine; alternate mark is found at K59 and K75. Residues K59 and K75 each carry the N6-succinyllysine; alternate modification. K94 is modified (N6-succinyllysine). NAD(+) is bound by residues 102–103 and N107; that span reads LP. K120 is modified (N6-acetyllysine). T133 is a binding site for NAD(+). Residue K140 is modified to N6-succinyllysine. An N6-acetyllysine modification is found at K144. N6-acetyllysine; alternate is present on K148. N6-succinyllysine; alternate is present on K148. K208 is a catalytic residue. N6-acetyllysine; alternate occurs at positions 237 and 241. An N6-succinyllysine; alternate mark is found at K237 and K241. K283 is a binding site for NAD(+). An N6-succinyllysine modification is found at K296. At K320 the chain carries N6-acetyllysine; alternate. The residue at position 320 (K320) is an N6-succinyllysine; alternate.

It belongs to the HIBADH-related family. 3-hydroxyisobutyrate dehydrogenase subfamily. Homodimer. Higher level in kidney, liver, and heart than in muscle.

The protein localises to the mitochondrion. It catalyses the reaction 3-hydroxy-2-methylpropanoate + NAD(+) = 2-methyl-3-oxopropanoate + NADH + H(+). Its pathway is amino-acid degradation; L-valine degradation. This Rattus norvegicus (Rat) protein is 3-hydroxyisobutyrate dehydrogenase, mitochondrial (Hibadh).